The primary structure comprises 129 residues: MSRTKETARAKRTITSKKSKKAPSGASGVKRSHRRWRPGTCAIREIRKFQKSTSLLIQCAPFQRLVRGVERQKEGLRFQSSAIMALQEATEAYIVSLMADTNLACIHAKRVTIQPKDIQLALRLRGERH.

Residues 1–36 (MSRTKETARAKRTITSKKSKKAPSGASGVKRSHRRW) form a disordered region. The span at 10 to 21 (AKRTITSKKSKK) shows a compositional bias: basic residues.

Belongs to the histone H3 family. In terms of assembly, the nucleosome is a histone octamer containing two molecules each of H2A, H2B, H3 and H4 assembled in one H3-H4 heterotetramer and two H2A-H2B heterodimers. The octamer wraps approximately 147 bp of DNA.

The protein localises to the nucleus. Its subcellular location is the chromosome. Functionally, core component of nucleosome. Nucleosomes wrap and compact DNA into chromatin, limiting DNA accessibility to the cellular machineries which require DNA as a template. Histones thereby play a central role in transcription regulation, DNA repair, DNA replication and chromosomal stability. DNA accessibility is regulated via a complex set of post-translational modifications of histones, also called histone code, and nucleosome remodeling. This chain is Histone H3, found in Leishmania infantum.